The primary structure comprises 229 residues: tRNA (guanine-N(1)-)-methyltransferase (229 aa).

S-adenosyl-L-methionine-binding positions include Gly109 and 129-134 (IGDFIL).

It belongs to the RNA methyltransferase TrmD family. In terms of assembly, homodimer.

Its subcellular location is the cytoplasm. It carries out the reaction guanosine(37) in tRNA + S-adenosyl-L-methionine = N(1)-methylguanosine(37) in tRNA + S-adenosyl-L-homocysteine + H(+). Its function is as follows. Specifically methylates guanosine-37 in various tRNAs. In Helicobacter pylori (strain Shi470), this protein is tRNA (guanine-N(1)-)-methyltransferase.